Here is a 74-residue protein sequence, read N- to C-terminus: Conotoxin ArMKLT2-041 (74 aa).

The first 22 residues, 1 to 22, serve as a signal peptide directing secretion; that stretch reads MKLTCVLIVAVLFLTACQLIAA. Positions 23–46 are excised as a propeptide; it reads DDSRDLQKFPRRKMRDGMLNTKNT. At Gln-49 the chain carries Pyrrolidone carboxylic acid. Disulfide bonds link Cys-50–Cys-65, Cys-57–Cys-68, and Cys-64–Cys-73.

Belongs to the conotoxin O1 superfamily. As to expression, expressed by the venom duct.

Its subcellular location is the secreted. In Conus arenatus (Sand-dusted cone), this protein is Conotoxin ArMKLT2-041.